A 248-amino-acid polypeptide reads, in one-letter code: tRNA pseudouridine synthase A (248 aa).

Asp53 acts as the Nucleophile in catalysis. Tyr111 is a substrate binding site.

This sequence belongs to the tRNA pseudouridine synthase TruA family. Homodimer.

The enzyme catalyses uridine(38/39/40) in tRNA = pseudouridine(38/39/40) in tRNA. Its function is as follows. Formation of pseudouridine at positions 38, 39 and 40 in the anticodon stem and loop of transfer RNAs. The polypeptide is tRNA pseudouridine synthase A (Streptococcus thermophilus (strain ATCC BAA-491 / LMD-9)).